The sequence spans 231 residues: Nitrate reductase [NAD(P)H] (231 aa).

One can recognise an FAD-binding FR-type domain in the interval 1 to 85 (PQKLGLPVGR…KGPHRHIEYT (85 aa)). FAD-binding positions include 25-28 (RAYT), 42-46 (LIKIY), Phe-47, 59-61 (LMS), and Thr-112.

It belongs to the nitrate reductase family. In terms of assembly, homodimer. The cofactor is FAD. Heme serves as cofactor. It depends on Mo-molybdopterin as a cofactor.

The enzyme catalyses nitrite + NAD(+) + H2O = nitrate + NADH + H(+). The catalysed reaction is nitrite + NADP(+) + H2O = nitrate + NADPH + H(+). In terms of biological role, nitrate reductase is a key enzyme involved in the first step of nitrate assimilation in plants, fungi and bacteria. The protein is Nitrate reductase [NAD(P)H] (NAR) of Zea mays (Maize).